The sequence spans 150 residues: Testis-expressed protein 22 (150 aa).

Positions 1-23 (MDSRKLSPRGKKLESHLSQEHRR) are enriched in basic and acidic residues. The tract at residues 1–26 (MDSRKLSPRGKKLESHLSQEHRRPPL) is disordered.

It localises to the cytoplasm. Its subcellular location is the cytoplasmic vesicle. It is found in the secretory vesicle. The protein localises to the acrosome. The sequence is that of Testis-expressed protein 22 (TEX22) from Homo sapiens (Human).